Consider the following 49-residue polypeptide: Large ribosomal subunit protein bL33B (49 aa).

The protein belongs to the bacterial ribosomal protein bL33 family.

The chain is Large ribosomal subunit protein bL33B (rpmG2) from Staphylococcus epidermidis (strain ATCC 12228 / FDA PCI 1200).